The primary structure comprises 404 residues: Cysteine desulfurase IscS (404 aa).

Residues 75–76 (AT), Asn-155, Gln-183, and 203–205 (SAH) contribute to the pyridoxal 5'-phosphate site. Lys-206 carries the post-translational modification N6-(pyridoxal phosphate)lysine. Position 243 (Thr-243) interacts with pyridoxal 5'-phosphate. The Cysteine persulfide intermediate role is filled by Cys-328. Cys-328 contacts [2Fe-2S] cluster.

Belongs to the class-V pyridoxal-phosphate-dependent aminotransferase family. NifS/IscS subfamily. In terms of assembly, homodimer. Forms a heterotetramer with IscU, interacts with other sulfur acceptors. Requires pyridoxal 5'-phosphate as cofactor.

The protein localises to the cytoplasm. It carries out the reaction (sulfur carrier)-H + L-cysteine = (sulfur carrier)-SH + L-alanine. Its pathway is cofactor biosynthesis; iron-sulfur cluster biosynthesis. In terms of biological role, master enzyme that delivers sulfur to a number of partners involved in Fe-S cluster assembly, tRNA modification or cofactor biosynthesis. Catalyzes the removal of elemental sulfur atoms from cysteine to produce alanine. Functions as a sulfur delivery protein for Fe-S cluster synthesis onto IscU, an Fe-S scaffold assembly protein, as well as other S acceptor proteins. This Pseudomonas fluorescens (strain ATCC BAA-477 / NRRL B-23932 / Pf-5) protein is Cysteine desulfurase IscS.